The following is a 524-amino-acid chain: Fusicoccadiene C-8 hydroxylase (524 aa).

Residues 16-36 (LQLLCIGPLVYACVSFIIKIV) traverse the membrane as a helical segment. Residues N126 and N344 are each glycosylated (N-linked (GlcNAc...) asparagine). C465 contributes to the heme binding site. An N-linked (GlcNAc...) asparagine glycan is attached at N496.

It belongs to the cytochrome P450 family. It depends on heme as a cofactor.

It is found in the membrane. It functions in the pathway mycotoxin biosynthesis. In terms of biological role, cytochrome P450 monooxygenase; part of the 2 gene clusters that mediate the biosynthesis of fusicoccins, diterpene glucosides that display phytohormone-like activity and function as potent activators of plasma membrane H(+)-ATPases in plants by modifying 14-3-3 proteins and cause the plant disease constriction canker. The first step in the pathway is performed by the fusicoccadiene synthase PaFS that possesses both prenyl transferase and terpene cyclase activity, converting isopentenyl diphosphate and dimethylallyl diphosphate into geranylgeranyl diphosphate (GGDP) and successively converting GGDP into fusicocca-2,10(14)-diene, a precursor for fusicoccin H. The second step is the oxidation at the C-8 position by the cytochrome P450 monooxygenase PaP450-2 to yield fusicocca-2,10(14)-diene-8-beta-ol. The cytochrome P450 monooxygenase PaP450-1 then catalyzes the hydroxylation at the C-16 position to produce fusicocca-2,10(14)-diene-8-beta,16-diol. The dioxygenase fc-dox then catalyzes the 16-oxydation of fusicocca-2,10(14)-diene-8-beta,16-diol to yield an aldehyde (8-beta-hydroxyfusicocca-1,10(14)-dien-16-al). The short-chain dehydrogenase/reductase fc-sdr catalyzes the reduction of the aldehyde to yield fusicocca-1,10(14)-diene-8-beta,16-diol. The next step is the hydroxylation at C-9 performed by the cytochrome P450 monooxygenase PaP450-3 that leads to fusicoccin H aglycon which is glycosylated to fusicoccin H by the O-glycosyltransferase PaGT. Hydroxylation at C-12 by the cytochrome P450 monooxygenase PaP450-4 leads then to the production of fusicoccin Q and is followed by methylation by the O-methyltransferase PaMT to yield fusicoccin P. Fusicoccin P is further converted to fusicoccin J via prenylation by the O-glucose prenyltransferase PaPT. Cytochrome P450 monooxygenase PaP450-5 then performs hydroxylation at C-19 to yield dideacetyl-fusicoccin A which is acetylated to 3'-O-deacetyl-fusicoccin A by the O-acetyltransferase PaAT-2. Finally, a another acetylation by the O-acetyltransferase PaAT-1 yields fusicoccin A. This Phomopsis amygdali (Fusicoccum amygdali) protein is Fusicoccadiene C-8 hydroxylase.